Here is a 381-residue protein sequence, read N- to C-terminus: MRAVPLHLVGTASLTLGFLLLLSLRLDPGQAKELKFVTLVFRHGDRGPIETFPNDPIKESSWPQGFGQLTKWGMGQHYELGSYIRRRYGRFLNNSYKHDQVYIRSTDVDRTLMSAMTNLAALFPPEGISIWNPRLLWQPIPVHTVSLSEDRLLYLPFRDCPRFQELKSETLKSEEFLKRLQPYKSFIDTLPSLSGFEDQDLFEIWSRLYDPLYCESVHNFTLPTWATEDAMTKLKELSELSLLSLYGIHKQKEKSRLQGGVLVNEILKNMKLATQPQKARKLIMYSAHDTTVSGLQMALDVYNGLLPPYASCHIMELYQDNGGHFVEMYYRNETQNEPYPLTLPGCTHSCPLEKFAELLDPVIPQDWATECMGTSNHQASL.

A signal peptide spans Met1–Ala31. Substrate is bound at residue Arg42. His43 acts as the Nucleophile in catalysis. Arg46 provides a ligand contact to substrate. N-linked (GlcNAc...) asparagine glycosylation is present at Asn93. Arg110 lines the substrate pocket. Cystine bridges form between Cys160–Cys371, Cys214–Cys312, and Cys346–Cys350. Asn219 carries N-linked (GlcNAc...) asparagine glycosylation. His288 contributes to the substrate binding site. The Proton donor role is filled by Asp289. A glycan (N-linked (GlcNAc...) asparagine) is linked at Asn332.

The protein belongs to the histidine acid phosphatase family. In terms of assembly, homodimer; dimer formation is required for phosphatase activity. Post-translationally, N-glycosylated. As to expression, expressed in prostate epithelium. Also expressed in the pelvic nerve and sacral spinal cord. Localizes in peptidergic and non-peptidergic nociceptive (pain-sensing) neurons.

It is found in the secreted. The protein localises to the cell membrane. It localises to the lysosome membrane. The catalysed reaction is a phosphate monoester + H2O = an alcohol + phosphate. It carries out the reaction a ribonucleoside 5'-phosphate + H2O = a ribonucleoside + phosphate. It catalyses the reaction 1-(9Z-octadecenoyl)-sn-glycero-3-phosphate + H2O = 1-(9Z-octadecenoyl)-sn-glycerol + phosphate. The enzyme catalyses O-phospho-L-tyrosyl-[protein] + H2O = L-tyrosyl-[protein] + phosphate. With respect to regulation, inhibited by L(+)-tartrate. Its function is as follows. A non-specific tyrosine phosphatase that dephosphorylates a diverse number of substrates under acidic conditions (pH 4-6) including alkyl, aryl, and acyl orthophosphate monoesters and phosphorylated proteins. Has lipid phosphatase activity and inactivates lysophosphatidic acid in seminal plasma. In terms of biological role, in addition to its tyrosine phosphatase activity, also has ecto-5'-nucleotidase activity in dorsal root ganglion (DRG) neurons. Generates adenosine from AMP. This extracellular adenosine leads to a decrease in chronic pain by activating A1R in nociceptive neurons. The protein is Prostatic acid phosphatase (Acp3) of Rattus norvegicus (Rat).